The following is a 479-amino-acid chain: Anaerobic nitric oxide reductase flavorubredoxin (479 aa).

Residues 30-210 (LRGSSYNSYL…PFSRLVTPKI (181 aa)) form a zinc metallo-hydrolase region. Fe cation is bound by residues His79, Glu81, Asp83, His147, Asp166, and His227. The Flavodoxin-like domain occupies 254–393 (ITIVYDTMSN…LCREHGREIA (140 aa)). FMN contacts are provided by residues 260–264 (TMSNN) and 342–369 (AFGS…EMSL). The Rubredoxin-like domain occupies 423–474 (GPRMQCSVCQWIYDPAKGEPMQDVAPGTPWSEVPDNFLCPECSLGKDVFDEL). Fe cation contacts are provided by Cys428, Cys431, Cys461, and Cys464.

It in the N-terminal section; belongs to the zinc metallo-hydrolase group 3 family. As to quaternary structure, homotetramer. It depends on Fe cation as a cofactor. The cofactor is FMN.

It localises to the cytoplasm. The protein operates within nitrogen metabolism; nitric oxide reduction. Anaerobic nitric oxide reductase; uses NADH to detoxify nitric oxide (NO), protecting several 4Fe-4S NO-sensitive enzymes. Has at least 2 reductase partners, only one of which (NorW, flavorubredoxin reductase) has been identified. NO probably binds to the di-iron center; electrons enter from the NorW at rubredoxin and are transferred sequentially to the FMN center and the di-iron center. Also able to function as an aerobic oxygen reductase. The sequence is that of Anaerobic nitric oxide reductase flavorubredoxin from Escherichia coli (strain UTI89 / UPEC).